The primary structure comprises 103 residues: Co-chaperonin GroES (103 aa).

This sequence belongs to the GroES chaperonin family. As to quaternary structure, heptamer of 7 subunits arranged in a ring. Interacts with the chaperonin GroEL.

The protein localises to the cytoplasm. Functionally, together with the chaperonin GroEL, plays an essential role in assisting protein folding. The GroEL-GroES system forms a nano-cage that allows encapsulation of the non-native substrate proteins and provides a physical environment optimized to promote and accelerate protein folding. GroES binds to the apical surface of the GroEL ring, thereby capping the opening of the GroEL channel. In Synechococcus sp. (strain CC9902), this protein is Co-chaperonin GroES.